Here is a 390-residue protein sequence, read N- to C-terminus: Aspergillopepsin-1 (390 aa).

Residues 1 to 19 (MVNTSLLAALTAYAVAVAA) form the signal peptide. A propeptide spans 20 to 67 (APTAPQVKGFSVNQVAVPKGVYRHPAAQLAKAYGKYHATVPTQVAAAA) (activation peptide). The 304-residue stretch at 84–387 (YITQVTVGDD…DASGPRLGFA (304 aa)) folds into the Peptidase A1 domain. Active-site residues include Asp-100 and Asp-281.

This sequence belongs to the peptidase A1 family. In terms of assembly, monomer.

It is found in the secreted. It carries out the reaction Hydrolysis of proteins with broad specificity. Generally favors hydrophobic residues in P1 and P1', but also accepts Lys in P1, which leads to activation of trypsinogen. Does not clot milk.. With respect to regulation, inhibited by the microbial peptide pepstatin A. Secreted aspartic endopeptidase that allows assimilation of proteinaceous substrates. The scissile peptide bond is attacked by a nucleophilic water molecule activated by two aspartic residues in the active site. Shows a broad primary substrate specificity. Favors hydrophobic residues at the P1 and P1' positions, but also accepts a lysine residue in the P1 position, leading to the activation of trypsinogen and chymotrypsinogen A. Hydrolyzes myoglobin, hemoglobin and other natural proteins. Hydrolyzes equine myoglobin between positions 'Met-1' and 'Gly-2', 'Lys-43' and 'Phe-44', and 'Leu-70' and 'Thr-71'. The sequence is that of Aspergillopepsin-1 (pepA) from Aspergillus pseudoglaucus (Eurotium repens).